Reading from the N-terminus, the 347-residue chain is Protein RecA (347 aa).

An ATP-binding site is contributed by 67-74 (GPESSGKT).

The protein belongs to the RecA family.

The protein localises to the cytoplasm. In terms of biological role, can catalyze the hydrolysis of ATP in the presence of single-stranded DNA, the ATP-dependent uptake of single-stranded DNA by duplex DNA, and the ATP-dependent hybridization of homologous single-stranded DNAs. It interacts with LexA causing its activation and leading to its autocatalytic cleavage. The polypeptide is Protein RecA (Helicobacter acinonychis (strain Sheeba)).